A 103-amino-acid chain; its full sequence is Small ribosomal subunit protein uS10 (103 aa).

This sequence belongs to the universal ribosomal protein uS10 family. In terms of assembly, part of the 30S ribosomal subunit.

In terms of biological role, involved in the binding of tRNA to the ribosomes. The sequence is that of Small ribosomal subunit protein uS10 from Blochmanniella pennsylvanica (strain BPEN).